The following is a 554-amino-acid chain: Probable oligo-1,6-glucosidase 3 (554 aa).

Asp199 serves as the catalytic Nucleophile. The active-site Proton donor is the Glu256.

Belongs to the glycosyl hydrolase 13 family.

Its subcellular location is the cytoplasm. It catalyses the reaction Hydrolysis of (1-&gt;6)-alpha-D-glucosidic linkages in some oligosaccharides produced from starch and glycogen by alpha-amylase, and in isomaltose.. The sequence is that of Probable oligo-1,6-glucosidase 3 (yugT) from Bacillus subtilis (strain 168).